The chain runs to 276 residues: uncharacterized protein (276 aa).

The protein to E.coli YjfZ.

This is an uncharacterized protein from Escherichia coli (strain K12).